The following is a 34-amino-acid chain: Papillosin (34 aa).

Functionally, has strong antibacterial activity against the Gram-positive bacteria M.luteus, S.aureus, B.megaterium, A.viridans and E.faecalis, and against the Gram-negative bacteria K.pneumoniae, E.coli DH5alpha, S.typhimurium, P.aeruginosa and E.aerogenes. Lacks hemolytic activity against sheep erythrocytes. In Halocynthia papillosa (Red sea-squirt), this protein is Papillosin.